The chain runs to 226 residues: 2-C-methyl-D-erythritol 4-phosphate cytidylyltransferase (226 aa).

This sequence belongs to the IspD/TarI cytidylyltransferase family. IspD subfamily.

It catalyses the reaction 2-C-methyl-D-erythritol 4-phosphate + CTP + H(+) = 4-CDP-2-C-methyl-D-erythritol + diphosphate. The protein operates within isoprenoid biosynthesis; isopentenyl diphosphate biosynthesis via DXP pathway; isopentenyl diphosphate from 1-deoxy-D-xylulose 5-phosphate: step 2/6. In terms of biological role, catalyzes the formation of 4-diphosphocytidyl-2-C-methyl-D-erythritol from CTP and 2-C-methyl-D-erythritol 4-phosphate (MEP). The polypeptide is 2-C-methyl-D-erythritol 4-phosphate cytidylyltransferase (Prochlorococcus marinus (strain MIT 9312)).